Here is a 40-residue protein sequence, read N- to C-terminus: Beta/delta-ctenitoxin-Pr1a (40 aa).

Intrachain disulfides connect cysteine 1–cysteine 15, cysteine 8–cysteine 21, cysteine 14–cysteine 31, and cysteine 23–cysteine 29.

Belongs to the neurotoxin 03 (Tx2) family. 05 subfamily. In terms of tissue distribution, expressed by the venom gland.

The protein localises to the secreted. Functionally, potent insecticidal toxin that binds to two distinct sites in insect sodium channels, with close affinity (Kd1=34.7 pM and Kd2=35.1 pM). Its association is rather fast (1.4 and 8.5 minutes, respectively for sites 1 and 2) and its dissociation is a slower process (5.4 and 32.8 minutes, respectively). On rat brain synaptosomes the toxin partially competes (~30%) with the beta-toxin CssIV, but does not compete with the alpha-toxin AaII, nor with the beta-toxin Ts VII. On cockroach nerve cord synaptosomes, the toxin does not compete with the anti-insect toxin LqqIT1, but it competes with the 'alpha-like' toxin BomIV (IC(50)=80 pM). In cockroach neurons, the toxin inhibits the inactivation of sodium channels and it shifts the sodium channel activation to hyperpolarizing potentials. Hence, it behaves like an 'alpha-like' toxin and binds preferentially to site 3 on the insect Nav channel, located on the domain IV. The toxin may also inhibit the N-methyl-D-aspartate (NMDA)-subtype of ionotropic glutamate receptor (GRIN). In vivo, the toxin causes excitatory effects on insects. The polypeptide is Beta/delta-ctenitoxin-Pr1a (Phoneutria reidyi (Brazilian Amazonian armed spider)).